A 437-amino-acid polypeptide reads, in one-letter code: Elongation factor 1-gamma (437 aa).

N-acetylalanine is present on A2. Residues 2–87 (AAGTLYTYPE…YVSNEELRGS (86 aa)) enclose the GST N-terminal domain. The 129-residue stretch at 88-216 (TPEAAAQVVQ…VKLCEKMAQF (129 aa)) folds into the GST C-terminal domain. K147 and K212 each carry N6-acetyllysine. Residues 221-254 (FAETQPKKDTPRKEKGSREEKQKPQAERKEEKKA) are compositionally biased toward basic and acidic residues. The disordered stretch occupies residues 221–268 (FAETQPKKDTPRKEKGSREEKQKPQAERKEEKKAAAPAPEEEMDECEQ). K253 is covalently cross-linked (Glycyl lysine isopeptide (Lys-Gly) (interchain with G-Cter in SUMO1)). Positions 276 to 437 (AKDPFAHLPK…KAFNQGKIFK (162 aa)) constitute an EF-1-gamma C-terminal domain. K285 participates in a covalent cross-link: Glycyl lysine isopeptide (Lys-Gly) (interchain with G-Cter in SUMO2). The residue at position 401 (K401) is an N6-acetyllysine. K434 is subject to N6-acetyllysine; alternate. Position 434 is an N6-malonyllysine; alternate (K434).

In terms of assembly, EF-1 is composed of four subunits: alpha, beta, delta, and gamma. In terms of tissue distribution, highly expressed in pancreatic tumor tissue and to a lesser extent in normal kidney, intestine, pancreas, stomach, lung, brain, spleen and liver.

Probably plays a role in anchoring the complex to other cellular components. The polypeptide is Elongation factor 1-gamma (EEF1G) (Homo sapiens (Human)).